Reading from the N-terminus, the 214-residue chain is Glutathione S-transferase 1 (214 aa).

Residues 2 to 83 (APMKLYGAVM…YAARKNKPEL (82 aa)) enclose the GST N-terminal domain. Glutathione contacts are provided by residues Ser-12, 41–42 (HK), 54–55 (QV), and 67–68 (ES). Residues 88-214 (NLEEAAMVDV…KVAALMKPSA (127 aa)) form the GST C-terminal domain.

It belongs to the GST superfamily. Phi family. Homodimer or heterodimer of GST-I and GST-IV (=GST-II). In terms of tissue distribution, expressed in the stem and leaves, lower levels are seen in the pollen and endosperm.

It catalyses the reaction RX + glutathione = an S-substituted glutathione + a halide anion + H(+). Conjugation of reduced glutathione to a wide number of exogenous and endogenous hydrophobic electrophiles. Involved in the detoxification of certain herbicides. This is Glutathione S-transferase 1 (GST1) from Zea mays (Maize).